A 164-amino-acid chain; its full sequence is S-ribosylhomocysteine lyase (164 aa).

Histidine 54, histidine 58, and cysteine 128 together coordinate Fe cation.

The protein belongs to the LuxS family. Homodimer. Fe cation is required as a cofactor.

It catalyses the reaction S-(5-deoxy-D-ribos-5-yl)-L-homocysteine = (S)-4,5-dihydroxypentane-2,3-dione + L-homocysteine. Involved in the synthesis of autoinducer 2 (AI-2) which is secreted by bacteria and is used to communicate both the cell density and the metabolic potential of the environment. The regulation of gene expression in response to changes in cell density is called quorum sensing. Catalyzes the transformation of S-ribosylhomocysteine (RHC) to homocysteine (HC) and 4,5-dihydroxy-2,3-pentadione (DPD). This Campylobacter jejuni subsp. jejuni serotype O:23/36 (strain 81-176) protein is S-ribosylhomocysteine lyase.